We begin with the raw amino-acid sequence, 277 residues long: Shikimate dehydrogenase (NADP(+)) (277 aa).

Residues 15 to 17 and T62 contribute to the shikimate site; that span reads SLS. The active-site Proton acceptor is K66. Residues N87 and D102 each contribute to the shikimate site. Residues 127–131, 151–156, and I219 contribute to the NADP(+) site; these read GSGGA and NRTVDK. Y221 is a binding site for shikimate. Residue G242 participates in NADP(+) binding.

It belongs to the shikimate dehydrogenase family. In terms of assembly, homodimer.

The catalysed reaction is shikimate + NADP(+) = 3-dehydroshikimate + NADPH + H(+). It functions in the pathway metabolic intermediate biosynthesis; chorismate biosynthesis; chorismate from D-erythrose 4-phosphate and phosphoenolpyruvate: step 4/7. Functionally, involved in the biosynthesis of the chorismate, which leads to the biosynthesis of aromatic amino acids. Catalyzes the reversible NADPH linked reduction of 3-dehydroshikimate (DHSA) to yield shikimate (SA). This chain is Shikimate dehydrogenase (NADP(+)), found in Bacillus cereus (strain B4264).